Consider the following 103-residue polypeptide: Conantokin R1-A (103 aa).

The first 21 residues, 1-21, serve as a signal peptide directing secretion; the sequence is MQLYTYLYLLVPLVTFHLILG. Positions 22-79 are excised as a propeptide; that stretch reads TGTLDHGGALTERRSTDATALKPEPVLQKSAARSTDDNGKDRLTQMKRILKKRGNNPR. The interval 34–83 is disordered; sequence RRSTDATALKPEPVLQKSAARSTDDNGKDRLTQMKRILKKRGNNPRADEE. A compositionally biased stretch (basic and acidic residues) spans 55–65; that stretch reads STDDNGKDRLT. 4-carboxyglutamate occurs at positions 82, 83, and 89.

It belongs to the conotoxin B superfamily. Requires Ca(2+) as cofactor. Mg(2+) serves as cofactor. In terms of tissue distribution, expressed by the venom duct.

The protein resides in the secreted. Conantokins inhibit N-methyl-D-aspartate (NMDA) receptors. This toxin has the highest potency for the NR2B/GRIN2B subunit (IC(50)=0.11 uM), followed by NR2D/GRIN2D (IC(50)=0.48 uM), NR2A/GRIN2A (IC(50)=2.1 uM), and NR2C/GRIN2C (IC(50)=6.1 uM) subunits when tested on rat receptors. This Conus rolani (Cone snail) protein is Conantokin R1-A.